The following is a 557-amino-acid chain: Tektin-5 (557 aa).

A coiled-coil region spans residues 302-386; the sequence is DNIRHAQNMR…LLERAIVAKE (85 aa). Repeat copies occupy residues 507–512, 513–518, 519–524, 525–530, 531–536, and 537–541. The interval 507–541 is 6 X 6 AA approximate tandem repeats of C-[GSK]-G-[GSPH]-A-[SLP]; that stretch reads CSGSALCKGPASCGGGASCGGGASCGGHAPCGSAL.

Belongs to the tektin family. Microtubule inner protein component of sperm flagellar doublet microtubules. Interacts with TEKT3. Ubiquitinated, leading to its degradation. Deubiquitinated by USP16, promoting its stability. Strongly expressed in germ cells of the testis (at protein level). Expressed in spermatozoa. Also detected in brain.

It localises to the cytoplasm. The protein localises to the cytoskeleton. The protein resides in the flagellum axoneme. Its function is as follows. Sperm-specific microtubule inner protein (MIP) part of the dynein-decorated doublet microtubules (DMTs) in flagellar axoneme. Forms an extensive interaction network in different conformations that reinforces the helix bundle composed by other tektin proteins (TEKT1 to TEKT4) and MIPs to anchor the tektin bundle onto the tubulin wall of A-tubule of the sperm flagellum. This chain is Tektin-5, found in Mus musculus (Mouse).